We begin with the raw amino-acid sequence, 450 residues long: Class E vacuolar protein-sorting machinery protein HSE1 (450 aa).

Positions 15–145 constitute a VHS domain; the sequence is ATDGKLRSDN…RIRRKWPGLL (131 aa). Disordered regions lie at residues 141 to 167, 179 to 212, and 374 to 450; these read WPGL…EDQE, FEKS…QTTS, and PNTQ…PPNY. The segment covering 147–167 has biased composition (basic and acidic residues); it reads EPEKPSKQKVSHQEATDEDQE. Positions 163 to 182 constitute a UIM domain; sequence DEDQELQRALKMSLEEFEKS. A compositionally biased stretch (polar residues) spans 184–196; the sequence is QQSNGSAVQSNSL. Over residues 197–209 the composition is skewed to low complexity; it reads QDHNQGQQQPQQQ. The SH3 domain maps to 212–271; sequence SGIRRVRALYDLNANEQDELSFRKGDVIVVLEQVYRDWWRGSLHGKIGIFPLNYVTPITE. Residues 394–432 are compositionally biased toward low complexity; that stretch reads NNTYQTTNGQYTQHNITPQQQYQVPSQNYQSQPPSMQSN.

Belongs to the STAM family. As to quaternary structure, component of the ESCRT-0 complex composed of HSE1 and VPS27.

It localises to the endosome membrane. Functionally, component of the ESCRT-0 complex which is the sorting receptor for ubiquitinated cargo proteins at the multivesicular body (MVB). This is Class E vacuolar protein-sorting machinery protein HSE1 (HSE1) from Candida glabrata (strain ATCC 2001 / BCRC 20586 / JCM 3761 / NBRC 0622 / NRRL Y-65 / CBS 138) (Yeast).